The primary structure comprises 61 residues: Large ribosomal subunit protein bL32 (61 aa).

A compositionally biased stretch (basic residues) spans Met-1–His-19. Positions Met-1–Asp-20 are disordered.

The protein belongs to the bacterial ribosomal protein bL32 family.

The sequence is that of Large ribosomal subunit protein bL32 from Porphyromonas gingivalis (strain ATCC 33277 / DSM 20709 / CIP 103683 / JCM 12257 / NCTC 11834 / 2561).